Here is a 773-residue protein sequence, read N- to C-terminus: Endonuclease MutS2 (773 aa).

An ATP-binding site is contributed by 334–341 (GANAGGKT). The region spanning 698 to 773 (VDLRGMRADV…GDGMTMVTLK (76 aa)) is the Smr domain.

This sequence belongs to the DNA mismatch repair MutS family. MutS2 subfamily. In terms of assembly, homodimer. Binds to stalled ribosomes, contacting rRNA.

Endonuclease that is involved in the suppression of homologous recombination and thus may have a key role in the control of bacterial genetic diversity. In terms of biological role, acts as a ribosome collision sensor, splitting the ribosome into its 2 subunits. Detects stalled/collided 70S ribosomes which it binds and splits by an ATP-hydrolysis driven conformational change. Acts upstream of the ribosome quality control system (RQC), a ribosome-associated complex that mediates the extraction of incompletely synthesized nascent chains from stalled ribosomes and their subsequent degradation. Probably generates substrates for RQC. In Solidesulfovibrio magneticus (strain ATCC 700980 / DSM 13731 / RS-1) (Desulfovibrio magneticus), this protein is Endonuclease MutS2.